Here is a 274-residue protein sequence, read N- to C-terminus: MSQIKPSRLSSSAEIRGARQLDVLQRHKLAEPQQDWLAEEVPVALVYNGISHVVMMATPKDLAAFALGFSLSEGIISSPQEIYSIEMTPGCNGIEVNIELSSRRFAGLKERRRAMAGRTGCGVCGIEQLDDIFRPITPLPFTQAFNLEHLDTALAQLKQVQPVGQLTGCTHAAAWINPEGELLGGCEDVGRHVALDKLLGIRAKQPWQQGAVLVSSRASYEMVQKTAMCGAEILFAVSAATTLAVEVAERCNLTLVGFSKPGRATVYTHPQRIK.

Catalysis depends on cysteine 121, which acts as the Cysteine persulfide intermediate. A Mo-bis(molybdopterin guanine dinucleotide)-binding site is contributed by 258–263; sequence FSKPGR.

The protein belongs to the FdhD family.

The protein resides in the cytoplasm. Functionally, required for formate dehydrogenase (FDH) activity. Acts as a sulfur carrier protein that transfers sulfur from IscS to the molybdenum cofactor prior to its insertion into FDH. The sequence is that of Sulfur carrier protein FdhD from Yersinia pestis bv. Antiqua (strain Antiqua).